Reading from the N-terminus, the 212-residue chain is Thiamine-phosphate synthase (212 aa).

4-amino-2-methyl-5-(diphosphooxymethyl)pyrimidine contacts are provided by residues 41–45 (QYREK) and Asp-76. The Mg(2+) site is built by Asp-77 and Asp-96. Ser-114 is a binding site for 4-amino-2-methyl-5-(diphosphooxymethyl)pyrimidine. Residue 141-143 (TTS) participates in 2-[(2R,5Z)-2-carboxy-4-methylthiazol-5(2H)-ylidene]ethyl phosphate binding. Residue Lys-144 coordinates 4-amino-2-methyl-5-(diphosphooxymethyl)pyrimidine. 2-[(2R,5Z)-2-carboxy-4-methylthiazol-5(2H)-ylidene]ethyl phosphate-binding positions include Gly-172 and 192–193 (IS).

The protein belongs to the thiamine-phosphate synthase family. Mg(2+) is required as a cofactor.

It carries out the reaction 2-[(2R,5Z)-2-carboxy-4-methylthiazol-5(2H)-ylidene]ethyl phosphate + 4-amino-2-methyl-5-(diphosphooxymethyl)pyrimidine + 2 H(+) = thiamine phosphate + CO2 + diphosphate. It catalyses the reaction 2-(2-carboxy-4-methylthiazol-5-yl)ethyl phosphate + 4-amino-2-methyl-5-(diphosphooxymethyl)pyrimidine + 2 H(+) = thiamine phosphate + CO2 + diphosphate. The enzyme catalyses 4-methyl-5-(2-phosphooxyethyl)-thiazole + 4-amino-2-methyl-5-(diphosphooxymethyl)pyrimidine + H(+) = thiamine phosphate + diphosphate. Its pathway is cofactor biosynthesis; thiamine diphosphate biosynthesis; thiamine phosphate from 4-amino-2-methyl-5-diphosphomethylpyrimidine and 4-methyl-5-(2-phosphoethyl)-thiazole: step 1/1. Its function is as follows. Condenses 4-methyl-5-(beta-hydroxyethyl)thiazole monophosphate (THZ-P) and 2-methyl-4-amino-5-hydroxymethyl pyrimidine pyrophosphate (HMP-PP) to form thiamine monophosphate (TMP). The polypeptide is Thiamine-phosphate synthase (Leuconostoc citreum (strain KM20)).